The chain runs to 340 residues: Mitochondrial import receptor subunit TOM40 homolog 2 (340 aa).

Positions 1-37 (MGNVMASTADAESSRGRGHLSAGLRLPEAPQYSGGVP) are disordered.

Belongs to the Tom40 family. As to quaternary structure, forms part of the preprotein translocase of the outer mitochondrial membrane (TOM complex). Interacts with mitochondrial targeting sequences. Only expressed in the male germline, detected in primary spermatocytes as well as post-meiotic stages. Not detected in stem cells and spermatogonia near the tip of the testis.

The protein localises to the mitochondrion outer membrane. Its function is as follows. Channel-forming protein essential for import of protein precursors into mitochondria. This Drosophila melanogaster (Fruit fly) protein is Mitochondrial import receptor subunit TOM40 homolog 2.